The chain runs to 587 residues: 2-succinyl-5-enolpyruvyl-6-hydroxy-3-cyclohexene-1-carboxylate synthase (587 aa).

It belongs to the TPP enzyme family. MenD subfamily. Homodimer. It depends on Mg(2+) as a cofactor. The cofactor is Mn(2+). Thiamine diphosphate serves as cofactor.

The catalysed reaction is isochorismate + 2-oxoglutarate + H(+) = 5-enolpyruvoyl-6-hydroxy-2-succinyl-cyclohex-3-ene-1-carboxylate + CO2. Its pathway is quinol/quinone metabolism; 1,4-dihydroxy-2-naphthoate biosynthesis; 1,4-dihydroxy-2-naphthoate from chorismate: step 2/7. The protein operates within cofactor biosynthesis; phylloquinone biosynthesis. Functionally, catalyzes the thiamine diphosphate-dependent decarboxylation of 2-oxoglutarate and the subsequent addition of the resulting succinic semialdehyde-thiamine pyrophosphate anion to isochorismate to yield 2-succinyl-5-enolpyruvyl-6-hydroxy-3-cyclohexene-1-carboxylate (SEPHCHC). The sequence is that of 2-succinyl-5-enolpyruvyl-6-hydroxy-3-cyclohexene-1-carboxylate synthase from Prochlorococcus marinus (strain MIT 9312).